The chain runs to 297 residues: Molybdate/tungstate import ATP-binding protein WtpC (297 aa).

The ABC transporter domain occupies 2–226 (LKVNNLSKIW…PKNKKVAEFL (225 aa)). Position 32 to 39 (32 to 39 (GPSGAGKS)) interacts with ATP.

Belongs to the ABC transporter superfamily. Sulfate/tungstate importer (TC 3.A.1.6) family. As to quaternary structure, the complex is composed of two ATP-binding proteins (WtpC), two transmembrane proteins (WtpB) and a solute-binding protein (WtpA).

The protein localises to the cell membrane. The enzyme catalyses tungstate(in) + ATP + H2O = tungstate(out) + ADP + phosphate + H(+). Functionally, part of the ABC transporter complex WtpABC involved in molybdate/tungstate import. Responsible for energy coupling to the transport system. The chain is Molybdate/tungstate import ATP-binding protein WtpC (wtpC) from Methanocaldococcus jannaschii (strain ATCC 43067 / DSM 2661 / JAL-1 / JCM 10045 / NBRC 100440) (Methanococcus jannaschii).